Here is a 327-residue protein sequence, read N- to C-terminus: Methionine import ATP-binding protein MetN (327 aa).

An ABC transporter domain is found at 3 to 239 (VELKNIEKIY…PKHAVTKELI (237 aa)). ATP is bound at residue 36 to 43 (GYSGAGKS).

Belongs to the ABC transporter superfamily. Methionine importer (TC 3.A.1.24) family. In terms of assembly, the complex is composed of two ATP-binding proteins (MetN), two transmembrane proteins (MetI) and a solute-binding protein (MetQ).

The protein resides in the cell inner membrane. It catalyses the reaction L-methionine(out) + ATP + H2O = L-methionine(in) + ADP + phosphate + H(+). It carries out the reaction D-methionine(out) + ATP + H2O = D-methionine(in) + ADP + phosphate + H(+). Its function is as follows. Part of the ABC transporter complex MetNIQ involved in methionine import. Responsible for energy coupling to the transport system. The polypeptide is Methionine import ATP-binding protein MetN (Helicobacter acinonychis (strain Sheeba)).